The sequence spans 109 residues: Small ribosomal subunit protein uS17 (109 aa).

Belongs to the universal ribosomal protein uS17 family. As to quaternary structure, part of the 30S ribosomal subunit.

Functionally, one of the primary rRNA binding proteins, it binds specifically to the 5'-end of 16S ribosomal RNA. In Methanococcus maripaludis (strain DSM 14266 / JCM 13030 / NBRC 101832 / S2 / LL), this protein is Small ribosomal subunit protein uS17.